The chain runs to 405 residues: Cysteine desulfurase IscS (405 aa).

Residues 75–76 (AT), Asn-156, Gln-184, and 204–206 (SAH) each bind pyridoxal 5'-phosphate. Lys-207 is modified (N6-(pyridoxal phosphate)lysine). Thr-244 serves as a coordination point for pyridoxal 5'-phosphate. The active-site Cysteine persulfide intermediate is the Cys-329. Cys-329 is a [2Fe-2S] cluster binding site.

This sequence belongs to the class-V pyridoxal-phosphate-dependent aminotransferase family. NifS/IscS subfamily. Homodimer. Forms a heterotetramer with IscU, interacts with other sulfur acceptors. The cofactor is pyridoxal 5'-phosphate.

Its subcellular location is the cytoplasm. The catalysed reaction is (sulfur carrier)-H + L-cysteine = (sulfur carrier)-SH + L-alanine. The protein operates within cofactor biosynthesis; iron-sulfur cluster biosynthesis. Its function is as follows. Master enzyme that delivers sulfur to a number of partners involved in Fe-S cluster assembly, tRNA modification or cofactor biosynthesis. Catalyzes the removal of elemental sulfur atoms from cysteine to produce alanine. Functions as a sulfur delivery protein for Fe-S cluster synthesis onto IscU, an Fe-S scaffold assembly protein, as well as other S acceptor proteins. This is Cysteine desulfurase IscS from Acinetobacter baumannii (strain AB307-0294).